The following is a 426-amino-acid chain: Dihydroorotase (426 aa).

Positions 58 and 60 each coordinate Zn(2+). Substrate is bound by residues 60-62 and N92; that span reads HLR. D150, H177, and H230 together coordinate Zn(2+). N276 is a binding site for substrate. D303 lines the Zn(2+) pocket. The active site involves D303. Residues H307 and 321-322 contribute to the substrate site; that span reads FG.

Belongs to the metallo-dependent hydrolases superfamily. DHOase family. Class I DHOase subfamily. It depends on Zn(2+) as a cofactor.

It carries out the reaction (S)-dihydroorotate + H2O = N-carbamoyl-L-aspartate + H(+). Its pathway is pyrimidine metabolism; UMP biosynthesis via de novo pathway; (S)-dihydroorotate from bicarbonate: step 3/3. Its function is as follows. Catalyzes the reversible cyclization of carbamoyl aspartate to dihydroorotate. In Listeria monocytogenes serotype 4a (strain HCC23), this protein is Dihydroorotase.